Consider the following 593-residue polypeptide: Arginine--tRNA ligase (593 aa).

Residues 138 to 148 (ANPTGPLHVGH) carry the 'HIGH' region motif.

Belongs to the class-I aminoacyl-tRNA synthetase family. As to quaternary structure, monomer.

The protein localises to the cytoplasm. It catalyses the reaction tRNA(Arg) + L-arginine + ATP = L-arginyl-tRNA(Arg) + AMP + diphosphate. The sequence is that of Arginine--tRNA ligase from Burkholderia vietnamiensis (strain G4 / LMG 22486) (Burkholderia cepacia (strain R1808)).